A 155-amino-acid chain; its full sequence is Secreted RxLR effector protein 38 (155 aa).

The first 17 residues, 1-17 (MHLIYIVMAATATTLHA), serve as a signal peptide directing secretion. Positions 49–64 (RFLRGAYEDVHREEER) match the RxLR-dEER motif.

The protein belongs to the RxLR effector family.

It localises to the secreted. The protein resides in the host nucleus. The protein localises to the host cytoplasm. Its function is as follows. Secreted effector that completely suppresses the host cell death induced by cell death-inducing proteins. The sequence is that of Secreted RxLR effector protein 38 from Plasmopara viticola (Downy mildew of grapevine).